We begin with the raw amino-acid sequence, 2116 residues long: MEKLLDEVLAPGGPYNLTVGSWVRDHVRSIVEGAWEVRDVVTAAQKRAIVAVIPRPVFTQMQVSDHPALHAISRYTRRHWIEWGPKEALHVLIDPSPGLLREVARVERRWVALCLHRTARKLATALAETASEAWHADYVCALRGAPSGPFYVHPEDVPHGGRAVADRCLLYYTPMQMCELMRTIDATLLVAVDLWPVALAAHVGDDWDDLGIAWHLDHDGGCPADCRGAGAGPTPGYTRPCTTRIYQVLPDTAHPGRLYRCGPRLWTRDCAVAELSWEVAQHCGHQARVRAVRCTLPIRHVRSLQPSARVRLPDLVHLAAVGRWRWFSLPRPVFQRMLSYCKTLSPDAYYSERVFKFKNALSHSITLAGNVLQEGWKGTCAEEDALCAYVAFRAWQSNARLAGIMKSAKRCAADSLSVAGWLDTIWDAIKRFFGSVPLAERMEEWEQDAAVAAFDRGPLEDGGRHLDTVQPPKSPPRPEIAATWIVHAASADRHCACAPRCDAPRERPSAPAGPPDDEALIPPWLFAERRALRCREWDFEALRARADTAAAPAPLAPRPARCPTVLYRHPAHHGPWLTLDEPGEADAALVLCDPLGQPLRGPERHFAAGAHMCAQARGLQAFVRVVPPPERPWADGGARAWAKFFRGCAWAQRLLGEPAVMHLPYTDGDVPQLIALALRTLAQQGAALALSVRDLPGGAAFDAHAVTAAVRAGPGQSAATSPPPGDPPPPRRARRSQRHLDARGTPPPAPARDPPPPAPSPPAPPRAGDPVLPTSAGPADRARHAELEVAYEPSDPPTPTKADPDSDIVESYARAAGPVHLRVRDIMDPPPGCKVVVNAANEGLLAGSGVCGAIFANATAALAADCRRLAPCPTGEAVATPGHGCGYTHIIHAVAPRRPRDPAALEEGEALLERAYRSIVALAAARRWACVACPLLGAGVYGWSAAESLRAALAATRAEPAERVSLHICHPDRATLTHASVLVGAGLAARRVSPPPTEPLASCPAGDPGRPAQRSASPPATPLGDATAPEPRGCQGCELCRYTRVTNDRAYVNLWLERDRGATSWAMRIPEVVVYGPEHLATHFPLNHYSVLKPAEVRPPRGMCGSDMWRCRGWQGMPQVRCTPSNAHAALCRTGVPPRVSTRGGELDPNTCWFRAAANVAQAARACGAYTSAGCPKCAYGRALSEARTHEDFAALSQRWSASHADASPDGTGDPLDPLMETVGCACSRVWVGSEHEAPPDHLLVSLHRAPNGPWGVVLEVRARPEGGNPTGHFVCAVGGGPRRVSDRPHLWLAVPLSRGGGTCAATDEGLAQAYYDDLEVRRLGDDAMARAALASVQRPRKGPYNIRVWNMAAGAGKTTRILAAFTREDLYVCPTNALLHEIQAKLRARDIDIKNAATYERALTKPLAAYRRIYIDEAFTLGGEYCAFVASQTTAEVICVGDRDQCGPHYANNCRTPVPDRWPTERSRHTWRFPDCWAARLRAGLDYDIEGERTGTFACNLWDGRQVDLHLAFSRETVRRLHEAGIRAYTVREAQGMSVGTACIHVGRDGTDVALALVRDLAIVSLTRASDALYLHELEDGSLRAAGLSAFLDAGALAELKEVPAGIDRVVAVEQAPPPLPPADGIPEAQDVPPFCPRTLEELVFGRAGHPHYADLNRVTEGEREVRYMRISRHLLNKNHTEMPGTERVLSAVCAVRRYRAGEDGSTLRTAVARQHPRPFRQIPPPRVTAGVAQEWRMTYLRERIDLTDVYTQMGVAARELTDRYARRYPEIFAGMCTAQSLSVPAFLKATLKCVDAALGPRDTEDCHAAQGKAGLEIRAWAKEWVQVMSPHFRAIQKIIMRALRPQFLVAAGHTEPEVDAWWQAHYTTNAIEVDFTEFDMNQTLATRDVELEISAALLGLPCAEDYRALRAGSYCTLRELGSTETGCERTSGEPATLLHNTTVAMCMAMRMVPKGVRWAGIFQGDDMVIFLPEGARSAALKWTPAEVGLFGFHIPVKHVSTPTPSFCGHVGTAAGLFHDVMHQAIKVLCRRFDPDVLEEQQVALLDRLRGVYAALPDTVAANAAYYDYSAERVLAIVRELTAYARGRGLDHPATIGALEEIQTPYARANLHDAD.

Residues 36–49 (EVRDVVTAAQKRAI) form a required for efficient proteolysis and P150-P90 interaction region. Residues 57–247 (VFTQMQVSDH…TRPCTTRIYQ (191 aa)) form the Alphavirus-like MT domain. Low complexity predominate over residues 711–720 (RAGPGQSAAT). The interval 711 to 780 (RAGPGQSAAT…VLPTSAGPAD (70 aa)) is disordered. Pro residues-rich tracts occupy residues 721 to 730 (SPPPGDPPPP) and 745 to 767 (TPPP…PPRA). 3 short sequence motifs (pxxPxR; class II SH3-binding) span residues 727–732 (PPPPRR), 747–752 (PPAPAR), and 761–766 (PPAPPR). In terms of domain architecture, Macro spans 806–985 (SDIVESYARA…LTHASVLVGA (180 aa)). The disordered stretch occupies residues 992 to 1031 (VSPPPTEPLASCPAGDPGRPAQRSASPPATPLGDATAPEP). The region spanning 1000–1301 (LASCPAGDPG…WLAVPLSRGG (302 aa)) is the Peptidase C27 domain. The active-site For cysteine protease activity is the Cys-1152. The interaction with host CALM1 stretch occupies residues 1152–1183 (CWFRAAANVAQAARACGAYTSAGCPKCAYGRA). The Zn(2+) site is built by Cys-1175, Cys-1178, Cys-1227, and His-1273. An EF-hand-like region spans residues 1193 to 1228 (FAALSQRWSASHADASPDGTGDPLDPLMETVGCACS). Catalysis depends on His-1273, which acts as the For cysteine protease activity. A (+)RNA virus helicase ATP-binding domain is found at 1320 to 1468 (EVRRLGDDAM…VPDRWPTERS (149 aa)). 1352–1359 (MAAGAGKT) is an a ribonucleoside 5'-triphosphate binding site. In terms of domain architecture, (+)RNA virus helicase C-terminal spans 1469-1609 (RHTWRFPDCW…ELKEVPAGID (141 aa)). Residues 1700-1900 (YRAGEDGSTL…VELEISAALL (201 aa)) form an involved in P150-P90 interaction region. The region spanning 1870 to 1981 (TNAIEVDFTE…FLPEGARSAA (112 aa)) is the RdRp catalytic domain. The short motif at 1902-1906 (LPCAE) is the Human RB1 binding element.

Interacts with RNA-directed RNA polymerase p90. Interacts with host CALM1; this interaction is necessary for the protease activity and viral infectivity. Interacts with host C1QBP. Interacts with the capsid protein. As to quaternary structure, interacts with human RB1/retinoblastoma protein. Interacts with protease/methyltransferase p150. Zn(2+) is required as a cofactor. Post-translationally, specific enzymatic cleavage by its own cysteine protease yield mature proteins p150 and p90.

Its subcellular location is the host membrane. It localises to the host cytoplasm. The protein localises to the host perinuclear region. The enzyme catalyses RNA(n) + a ribonucleoside 5'-triphosphate = RNA(n+1) + diphosphate. It catalyses the reaction a ribonucleoside 5'-triphosphate + H2O = a ribonucleoside 5'-diphosphate + phosphate + H(+). It carries out the reaction ATP + H2O = ADP + phosphate + H(+). Probable principal replicase for the negative-strand DNA, which replicates the 40S (+) genomic RNA into (-) antigenomic RNA. It cannot replicate the (-) into (+) until cleaved into p150 and p90 mature proteins. In terms of biological role, protease that cleaves the precursor polyprotein into two mature products. Together with RNA-directed RNA polymerase p90, replicates the 40S genomic and antigenomic RNA by recognizing replications specific signals. The heterodimer P150/p90 is probably the principal replicase for positive-strand genomic RNA and the 24S subgenomic RNA, which codes for structural proteins. Responsible for the mRNA-capping of the viral mRNAs. This function is necessary since all viral RNAs are synthesized in the cytoplasm, and host capping enzymes are restricted to the nucleus. Forms fibers late in the infection that may be involved in cell-to-cell spread of the virus RNA in the absence of virus particle formation. Its function is as follows. Together with protease/methyltransferase p150, replicates the 40S genomic and antigenomic RNA by recognizing replications specific signals. The heterodimer P150/p90 is probably the principal replicase for positive-strand genomic RNA and the 24S subgenomic RNA, which codes for structural proteins. A helicase activity is probably also present. This Rubella virus (strain TO-336) (RUBV) protein is Non-structural polyprotein p200.